The sequence spans 259 residues: Proteasome subunit beta type-4 (259 aa).

Belongs to the peptidase T1B family. In terms of assembly, the 26S proteasome consists of a 20S proteasome core and two 19S regulatory subunits. The 20S proteasome core is composed of 28 subunits that are arranged in four stacked rings, resulting in a barrel-shaped structure. The two end rings are each formed by seven alpha subunits, and the two central rings are each formed by seven beta subunits. The catalytic chamber with the active sites is on the inside of the barrel.

The protein resides in the cytoplasm. It is found in the nucleus. Its function is as follows. Non-catalytic component of the proteasome, a multicatalytic proteinase complex which is characterized by its ability to cleave peptides with Arg, Phe, Tyr, Leu, and Glu adjacent to the leaving group at neutral or slightly basic pH. The proteasome has an ATP-dependent proteolytic activity. This Dictyostelium discoideum (Social amoeba) protein is Proteasome subunit beta type-4 (psmB4-1).